The sequence spans 273 residues: Large ribosomal subunit protein uL2cy (273 aa).

Disordered regions lie at residues Met1–Val22 and Asn224–Lys273.

This sequence belongs to the universal ribosomal protein uL2 family. As to quaternary structure, part of the 50S ribosomal subunit.

The protein resides in the plastid. It is found in the chloroplast. In Chloranthus spicatus (Chulantree), this protein is Large ribosomal subunit protein uL2cy (rpl2-B).